Reading from the N-terminus, the 248-residue chain is Peptidyl-tRNA hydrolase (248 aa).

Tyr-14 serves as a coordination point for tRNA. Residue His-19 is the Proton acceptor of the active site. Positions 64, 66, and 112 each coordinate tRNA. The disordered stretch occupies residues 190-248; that stretch reads PRSSTGEASKGRKKAQKSEPGVAKTPAKAATPEAPAAGDIPAAPEDSRSPMQKLLDKFK. Residues 212–226 are compositionally biased toward low complexity; it reads AKTPAKAATPEAPAA.

This sequence belongs to the PTH family. In terms of assembly, monomer.

It localises to the cytoplasm. It catalyses the reaction an N-acyl-L-alpha-aminoacyl-tRNA + H2O = an N-acyl-L-amino acid + a tRNA + H(+). Its function is as follows. Hydrolyzes ribosome-free peptidyl-tRNAs (with 1 or more amino acids incorporated), which drop off the ribosome during protein synthesis, or as a result of ribosome stalling. Functionally, catalyzes the release of premature peptidyl moieties from peptidyl-tRNA molecules trapped in stalled 50S ribosomal subunits, and thus maintains levels of free tRNAs and 50S ribosomes. This is Peptidyl-tRNA hydrolase from Ruegeria sp. (strain TM1040) (Silicibacter sp.).